Here is a 404-residue protein sequence, read N- to C-terminus: Activity-regulated cytoskeleton-associated protein (404 aa).

Residues 51–78 (EVSKQVERELKGLQKSVGKLENNLEDHV) are a coiled coil. Residues 351–404 (VQGNMDHSEEPSPQRTPEIQSGDSVESMPPSTTASPVPSNGTQPEPPSPPATVI) form a disordered region. A compositionally biased stretch (polar residues) spans 363–393 (PQRTPEIQSGDSVESMPPSTTASPVPSNGTQ). The span at 394–404 (PEPPSPPATVI) shows a compositional bias: pro residues.

The protein belongs to the ARC/ARG3.1 family. Homooligomer; homooligomerizes into virion-like capsids. In terms of processing, palmitoylation anchors the protein into the membrane by allowing direct insertion into the hydrophobic core of the lipid bilayer. In terms of tissue distribution, expressed at various levels throughout the brain.

It localises to the extracellular vesicle membrane. The protein resides in the postsynaptic cell membrane. The protein localises to the synapse. It is found in the postsynaptic density. Its subcellular location is the early endosome membrane. It localises to the cell projection. The protein resides in the dendrite. The protein localises to the cytoplasm. It is found in the cytoskeleton. Its subcellular location is the cell cortex. It localises to the dendritic spine. Functionally, master regulator of synaptic plasticity that self-assembles into virion-like capsids that encapsulate RNAs and mediate intercellular RNA transfer in the nervous system. ARC protein is released from neurons in extracellular vesicles that mediate the transfer of ARC mRNA into new target cells, where ARC mRNA can undergo activity-dependent translation. ARC capsids are endocytosed and are able to transfer ARC mRNA into the cytoplasm of neurons. Acts as a key regulator of synaptic plasticity: required for protein synthesis-dependent forms of long-term potentiation (LTP) and depression (LTD) and for the formation of long-term memory. Regulates synaptic plasticity by promoting endocytosis of AMPA receptors (AMPARs) in response to synaptic activity: this endocytic pathway maintains levels of surface AMPARs in response to chronic changes in neuronal activity through synaptic scaling, thereby contributing to neuronal homeostasis. Acts as a postsynaptic mediator of activity-dependent synapse elimination in the developing cerebellum by mediating elimination of surplus climbing fiber synapses. Accumulates at weaker synapses, probably to prevent their undesired enhancement. This suggests that ARC-containing virion-like capsids may be required to eliminate synaptic material. This is Activity-regulated cytoskeleton-associated protein from Gallus gallus (Chicken).